The sequence spans 782 residues: General transcription and DNA repair factor IIH helicase/translocase subunit XPB (782 aa).

A compositionally biased stretch (basic and acidic residues) spans 1 to 11; the sequence is MGKRDRADRDK. Disordered regions lie at residues 1–51 and 218–241; these read MGKR…ESGT and SAISKTAESSGGPSTSRVTDPQGK. The Nuclear localization signal signature appears at 6–18; that stretch reads RADRDKKKSRKRH. Over residues 21–30 the composition is skewed to acidic residues; sequence DEEDDEEDAP. The segment covering 218-236 has biased composition (polar residues); the sequence is SAISKTAESSGGPSTSRVT. The 162-residue stretch at 327–488 folds into the Helicase ATP-binding domain; it reads MFGNGRARSG…DLNFLIGPKL (162 aa). 340–347 contacts ATP; sequence LPCGAGKS. A DEVH box motif is present at residues 441-444; that stretch reads DEVH. The Helicase C-terminal domain maps to 542–702; it reads RACQFLIKFH…LAGMEEEDLA (161 aa). 2 residues coordinate ATP: Arg642 and Arg645. Phosphoserine is present on Ser686. Ser751 is modified (phosphoserine; by CK2).

It belongs to the helicase family. RAD25/XPB subfamily. In terms of assembly, component of the 7-subunit TFIIH core complex composed of XPB/ERCC3, XPD/ERCC2, GTF2H1, GTF2H2, GTF2H3, GTF2H4 and GTF2H5, which is active in NER. The core complex associates with the 3-subunit CDK-activating kinase (CAK) module composed of CCNH/cyclin H, CDK7 and MNAT1 to form the 10-subunit holoenzyme (holo-TFIIH) active in transcription. Interacts with PUF60. Interacts with ATF7IP. Interacts with KAT2A; leading to KAT2A recruitment to promoters and acetylation of histones. Part of TBP-based Pol II pre-initiation complex (PIC), in which Pol II core assembles with general transcription factors and other specific initiation factors including GTF2E1, GTF2E2, GTF2F1, GTF2F2, TCEA1, ERCC2, ERCC3, GTF2H2, GTF2H3, GTF2H4, GTF2H5, GTF2A1, GTF2A2, GTF2B and TBP; this large multi-subunit PIC complex mediates DNA unwinding and targets Pol II core to the transcription start site where the first phosphodiester bond forms. (Microbial infection) Interacts with Epstein-Barr virus EBNA2. In terms of processing, phosphorylation on Ser-751 by CK2 controls the 5'-excision activity of ERCC1-XPF endonuclease; phosphorylated protein inhibits the excision activity and thus NER. Dephosphorylation reactivates the 5'-excision step. Phosphorylation has no effect on transcription or the 3'-5' helicase activity.

It localises to the nucleus. It catalyses the reaction Couples ATP hydrolysis with the unwinding of duplex DNA by translocating in the 3'-5' direction.. The enzyme catalyses ATP + H2O = ADP + phosphate + H(+). With respect to regulation, phosphorylation on Ser-751 by CK2 controls the 5'-excision activity of ERCC1-XPF endonuclease; phosphorylated protein inhibits the excision activity and thus NER. ATPase activity is stimulated by TFIIH subunit p52 (GTF2H4). DNA translocase activity by this subunit in TFIIH is stimulated by XPA, ERCC5/XPG and XFP plus ERCC1; translocase activity is sensitive to triptolide which targets this enzyme. Its function is as follows. ATP-dependent 3'-5' DNA helicase/translocase. Binds dsDNA rather than ssDNA, unzipping it in a translocase rather than classical helicase activity. Component of the general transcription and DNA repair factor IIH (TFIIH) core complex. When complexed to CDK-activating kinase (CAK), involved in RNA transcription by RNA polymerase II. The ATPase activity of XPB/ERCC3, but not its helicase activity, is required for DNA opening; it may wrap around the damaged DNA wedging it open, causing localized melting that allows XPD/ERCC2 helicase to anchor. In transcription, TFIIH has an essential role in transcription initiation. When the pre-initiation complex (PIC) has been established, TFIIH is required for promoter opening and promoter escape. The ATP-dependent helicase activity of XPB/ERCC3 is required for promoter opening and promoter escape. In transcription pre-initiation complexes induces and propagates a DNA twist to open DNA. Also involved in transcription-coupled nucleotide excision repair (NER) of damaged DNA. In NER, TFIIH acts by opening DNA around the lesion to allow the excision of the damaged oligonucleotide and its replacement by a new DNA fragment. The structure of the TFIIH transcription complex differs from the NER-TFIIH complex; large movements by XPD/ERCC2 and XPB/ERCC3 are stabilized by XPA. XPA retains XPB/ERCC3 at the 5' end of a DNA bubble (mimicking DNA damage). This chain is General transcription and DNA repair factor IIH helicase/translocase subunit XPB, found in Homo sapiens (Human).